The chain runs to 369 residues: Molybdenum import ATP-binding protein ModC 1 (369 aa).

One can recognise an ABC transporter domain in the interval 10–240 (KGYIEVAFNG…PALASRSEAA (231 aa)). ATP is bound at residue 42–49 (GPPGCGKT). The region spanning 297–367 (ASSILNVFRA…ELCGKLGDDG (71 aa)) is the Mop domain.

Belongs to the ABC transporter superfamily. Molybdate importer (TC 3.A.1.8) family. In terms of assembly, the complex is composed of two ATP-binding proteins (ModC), two transmembrane proteins (ModB) and a solute-binding protein (ModA).

It localises to the cell inner membrane. The enzyme catalyses molybdate(out) + ATP + H2O = molybdate(in) + ADP + phosphate + H(+). Its function is as follows. Part of the ABC transporter complex ModABC involved in molybdenum import. Responsible for energy coupling to the transport system. The polypeptide is Molybdenum import ATP-binding protein ModC 1 (Bradyrhizobium diazoefficiens (strain JCM 10833 / BCRC 13528 / IAM 13628 / NBRC 14792 / USDA 110)).